The following is a 445-amino-acid chain: MSNTVYIGAKEYFPGIGKIGFEGRESDNPLAFKVYDANKTIGDKTMAEHLRFAVAYWHSFCGNGADPFGPGTRAYPWDVGNSALARAEAKSDAAFEFFTKLGVPYYCFHDIDLSPDADDIGEYESNLKHMVGVAKQRQADTGIKLLWGTANLFSHPRYMNGASTNPDFNVVARAAVQVKAAIDATVELGGENYVFWGGREGYACLHNTQMKREQDNMARFLTLARDYGRSIGFTGNFLIEPKPMEPMKHQYDFDSATVIGFLRQHGLDQDFKLNIEANHATLSGHSFEHDLQVASDAGLLGSIDANRGNPQNGWDTDQFPTDLYDTVGAMLVVLRQGGLAPGGLNFDAKVRRESSDPQDLFLAHIGGMDAFARGLEVANALLTSSPLEQWRAERYASFDNGTGADFAAGKITLADLAAHAAGNAPKQISGRQEAYENLINQYLTR.

Catalysis depends on residues His109 and Asp112. Mg(2+) is bound by residues Glu240, Glu276, His279, Asp304, Asp315, Asp317, and Asp347.

This sequence belongs to the xylose isomerase family. Homotetramer. Mg(2+) is required as a cofactor.

It localises to the cytoplasm. It catalyses the reaction alpha-D-xylose = alpha-D-xylulofuranose. The sequence is that of Xylose isomerase from Xanthomonas oryzae pv. oryzae (strain MAFF 311018).